The primary structure comprises 643 residues: Fructose-1,6-bisphosphatase class 3 (643 aa).

It belongs to the FBPase class 3 family. The cofactor is Mn(2+).

It carries out the reaction beta-D-fructose 1,6-bisphosphate + H2O = beta-D-fructose 6-phosphate + phosphate. The protein operates within carbohydrate biosynthesis; gluconeogenesis. The protein is Fructose-1,6-bisphosphatase class 3 of Lacticaseibacillus paracasei (strain ATCC 334 / BCRC 17002 / CCUG 31169 / CIP 107868 / KCTC 3260 / NRRL B-441) (Lactobacillus paracasei).